We begin with the raw amino-acid sequence, 222 residues long: Hexitol phosphatase B (222 aa).

The Nucleophile role is filled by Asp13. Residues Asp13 and Asp15 each coordinate a divalent metal cation. Substrate is bound by residues 13-15 (DMD), 115-116 (SA), and Lys148. The active-site Proton donor is the Asp15. Residue Asp173 coordinates a divalent metal cation.

It belongs to the HAD-like hydrolase superfamily. CbbY/CbbZ/Gph/YieH family. Mg(2+) is required as a cofactor. Mn(2+) serves as cofactor. Requires Co(2+) as cofactor. The cofactor is Zn(2+).

The catalysed reaction is sugar phosphate + H2O = sugar + phosphate.. The enzyme catalyses 2-deoxy-D-glucose 6-phosphate + H2O = 2-deoxy-D-glucose + phosphate. It catalyses the reaction D-mannitol 1-phosphate + H2O = D-mannitol + phosphate. It carries out the reaction D-sorbitol 6-phosphate + H2O = D-sorbitol + phosphate. Functionally, sugar-phosphate phosphohydrolase that catalyzes the dephosphorylation of D-mannitol 1-phosphate and D-sorbitol 6-phosphate. Also catalyzes the dephosphorylation of 2-deoxyglucose 6-phosphate (2dGlu6P); this is a biologically important activity in vivo since it contributes to the elimination of this toxic compound and plays an important role in the resistance of E.coli to 2-deoxyglucose. To a lesser extent, is also able to dephosphorylate mannose 6-phosphate (Man6P), erythrose-4-phosphate, 2-deoxyribose-5-phosphate (2dRib5P), ribose-5-phosphate (Rib5P) and glucose-6-phosphate (Glu6P) in vitro. This is Hexitol phosphatase B from Escherichia coli (strain K12).